An 85-amino-acid chain; its full sequence is Toxin Cll5c* (85 aa).

A signal peptide spans 1-17 (MNSLLIITACLVLFVWA). The 66-residue stretch at 18–83 (KEGYLVNKST…TYPLPNKSCS (66 aa)) folds into the LCN-type CS-alpha/beta domain. Disulfide bonds link cysteine 29-cysteine 82, cysteine 33-cysteine 58, cysteine 42-cysteine 63, and cysteine 46-cysteine 65. Positions 84 to 85 (KK) are cleaved as a propeptide — removed by a carboxypeptidase.

Belongs to the long (4 C-C) scorpion toxin superfamily. Sodium channel inhibitor family. Beta subfamily. Expressed by the venom gland.

It localises to the secreted. Its function is as follows. Beta toxins bind voltage-independently at site-4 of sodium channels (Nav) and shift the voltage of activation toward more negative potentials thereby affecting sodium channel activation and promoting spontaneous and repetitive firing. This chain is Toxin Cll5c*, found in Centruroides limpidus (Mexican scorpion).